We begin with the raw amino-acid sequence, 389 residues long: tRNA(Met) cytidine acetate ligase (389 aa).

Residues 8–21 (IAEF…HEYL), Gly-97, Asn-153, and Arg-176 contribute to the ATP site.

This sequence belongs to the TmcAL family.

It localises to the cytoplasm. The catalysed reaction is cytidine(34) in elongator tRNA(Met) + acetate + ATP = N(4)-acetylcytidine(34) in elongator tRNA(Met) + AMP + diphosphate. Its function is as follows. Catalyzes the formation of N(4)-acetylcytidine (ac(4)C) at the wobble position of elongator tRNA(Met), using acetate and ATP as substrates. First activates an acetate ion to form acetyladenylate (Ac-AMP) and then transfers the acetyl group to tRNA to form ac(4)C34. This Lactococcus lactis subsp. cremoris (strain SK11) protein is tRNA(Met) cytidine acetate ligase.